The primary structure comprises 435 residues: Methionine aminopeptidase 2 (435 aa).

The segment at 57-77 (AIDGDQAAAKKKKSKKKKKKA) is disordered. Positions 65 to 77 (AKKKKSKKKKKKA) are enriched in basic residues. A substrate-binding site is contributed by H188. A divalent metal cation contacts are provided by D208, D219, and H288. H296 is a substrate binding site. Residues E321 and E416 each coordinate a divalent metal cation.

This sequence belongs to the peptidase M24A family. Methionine aminopeptidase eukaryotic type 2 subfamily. It depends on Co(2+) as a cofactor. Zn(2+) is required as a cofactor. Mn(2+) serves as cofactor. The cofactor is Fe(2+).

Its subcellular location is the cytoplasm. It catalyses the reaction Release of N-terminal amino acids, preferentially methionine, from peptides and arylamides.. Cotranslationally removes the N-terminal methionine from nascent proteins. The N-terminal methionine is often cleaved when the second residue in the primary sequence is small and uncharged (Met-Ala-, Cys, Gly, Pro, Ser, Thr, or Val). The protein is Methionine aminopeptidase 2 of Clavispora lusitaniae (strain ATCC 42720) (Yeast).